Reading from the N-terminus, the 130-residue chain is Small ribosomal subunit protein uS9 (130 aa).

Residues 109-130 (RMKERKKYGLKAARRAPQFSKR) are disordered. Residues 111–130 (KERKKYGLKAARRAPQFSKR) are compositionally biased toward basic residues.

Belongs to the universal ribosomal protein uS9 family.

The protein is Small ribosomal subunit protein uS9 of Lachnoclostridium phytofermentans (strain ATCC 700394 / DSM 18823 / ISDg) (Clostridium phytofermentans).